The following is a 306-amino-acid chain: MGPTASGKTGLALHLAEHFPLEIVNADSVQVYRGMDIGSAKPTLQERQAIVHHLIDVTTPDDPFSAGRFRTAALEVIEDCHRRGVIPALVGGTGFYFRAVEQGIAEIPEVDAQIVAELNRRVCDEVGLACCYAQLQQVDPPWAARVEPGDRQRIVRGLSVYLASGQPLSYWQQLSCQQAPEGPALRICKLAIEWPREQLYARINQRFEQMLKEGFMEEVQGLLSRGYHGDLPAMRAVGYRALIGYLQGAYDLARAVELGQRDSRRYAKRQITWLKAEPGLQWLAPEGAKQAALDEVRAFLQFFKKK.

Residue 2-9 participates in ATP binding; sequence GPTASGKT. 4 to 9 provides a ligand contact to substrate; sequence TASGKT. 2 interaction with substrate tRNA regions span residues 27-30 and 152-156; these read DSVQ and QRIVR.

It belongs to the IPP transferase family. In terms of assembly, monomer. Mg(2+) serves as cofactor.

The catalysed reaction is adenosine(37) in tRNA + dimethylallyl diphosphate = N(6)-dimethylallyladenosine(37) in tRNA + diphosphate. Functionally, catalyzes the transfer of a dimethylallyl group onto the adenine at position 37 in tRNAs that read codons beginning with uridine, leading to the formation of N6-(dimethylallyl)adenosine (i(6)A). The protein is tRNA dimethylallyltransferase of Magnetococcus marinus (strain ATCC BAA-1437 / JCM 17883 / MC-1).